The primary structure comprises 118 residues: Large ribosomal subunit protein bL20 (118 aa).

Belongs to the bacterial ribosomal protein bL20 family.

Its function is as follows. Binds directly to 23S ribosomal RNA and is necessary for the in vitro assembly process of the 50S ribosomal subunit. It is not involved in the protein synthesizing functions of that subunit. In Trichodesmium erythraeum (strain IMS101), this protein is Large ribosomal subunit protein bL20.